The primary structure comprises 361 residues: Histidinol-phosphate aminotransferase (361 aa).

At Lys219 the chain carries N6-(pyridoxal phosphate)lysine.

This sequence belongs to the class-II pyridoxal-phosphate-dependent aminotransferase family. Histidinol-phosphate aminotransferase subfamily. In terms of assembly, homodimer. Pyridoxal 5'-phosphate is required as a cofactor.

It carries out the reaction L-histidinol phosphate + 2-oxoglutarate = 3-(imidazol-4-yl)-2-oxopropyl phosphate + L-glutamate. It functions in the pathway amino-acid biosynthesis; L-histidine biosynthesis; L-histidine from 5-phospho-alpha-D-ribose 1-diphosphate: step 7/9. This chain is Histidinol-phosphate aminotransferase, found in Acinetobacter baylyi (strain ATCC 33305 / BD413 / ADP1).